A 412-amino-acid chain; its full sequence is BURP domain-containing protein 13 (412 aa).

The signal sequence occupies residues 1–23; sequence MARFLLLLVAVAAAAAVLSLGDA. The region spanning 190–406 is the BURP domain; sequence FFHEEAVRVG…PYGHIVWAKN (217 aa). N-linked (GlcNAc...) asparagine glycosylation occurs at Asn369.

In terms of tissue distribution, specifically expressed in anthers, in the tapetum and microspores (at protein level).

Its function is as follows. Required for pollen development. Probably synthesized in the tapetum, packaged in Ubisch bodies and transported at appropriate stages to the micropsores. The protein is BURP domain-containing protein 13 (BURP13) of Oryza sativa subsp. japonica (Rice).